We begin with the raw amino-acid sequence, 61 residues long: Large ribosomal subunit protein bL32 (61 aa).

The span at 1–16 shows a compositional bias: basic residues; it reads MAVPKRKTSPSKRGMR. Residues 1–33 are disordered; that stretch reads MAVPKRKTSPSKRGMRRSADGLKAPTYVEDKNS.

The protein belongs to the bacterial ribosomal protein bL32 family.

The polypeptide is Large ribosomal subunit protein bL32 (Allorhizobium ampelinum (strain ATCC BAA-846 / DSM 112012 / S4) (Agrobacterium vitis (strain S4))).